The primary structure comprises 184 residues: Photosystem I assembly protein Ycf4 (184 aa).

The next 2 membrane-spanning stretches (helical) occupy residues 22-42 and 57-77; these read VCWA…GTSS and IIFF…LFIS.

Belongs to the Ycf4 family.

It localises to the plastid. Its subcellular location is the chloroplast thylakoid membrane. Its function is as follows. Seems to be required for the assembly of the photosystem I complex. This chain is Photosystem I assembly protein Ycf4, found in Morus indica (Mulberry).